The chain runs to 374 residues: MLVKAHLRKQGINPLKVRKKGISLLGAGKKVKPMDIALFTRQMATMMGAGVPLLQSFDIIGEGFDNPNMRKLVDEIKQEVSSGNSLANSLRKKPQYFDELYCNLVDAGEQSGALENLLDRVATYKEKTESLKAKIRKAMTYPIAVIIVALIVSAILLIKVVPQFQSVFQGFGAELPAFTQMVVNLSEFLQEWWLAVIVGVGAIGFTFKELHKRSKKFRDTLDRTILKLPIFGGIVYKSAVARYARTLSTTFAAGVPLVDALDSVSGATGNIVFKNAVSKIKQDVSTGMQLNFSMRTTSVFPNMAIQMTAIGEESGSLDEMLSKVASYYEEEVDNAVDNLTTLMEPMIMAVLGVLVGGLIVAMYLPIFQLGNVVG.

Helical transmembrane passes span 138 to 158, 187 to 207, and 347 to 367; these read AMTY…ILLI, EFLQ…GFTF, and IMAV…LPIF.

Belongs to the GSP F family. In terms of assembly, homotetramer. Interacts with PilB.

It is found in the cell inner membrane. Its function is as follows. Essential inner membrane component of the type IV pilus (T4P) that plays a role in surface and host cell adhesion, colonization, biofilm maturation, virulence, and twitching, a form of surface-associated motility facilitated by cycles of extension, adhesion, and retraction of T4P fibers. Controls both pilus assembly and disassembly and plays an important role in PilB localization to the complex and ATPase activity. This Pseudomonas aeruginosa (strain ATCC 15692 / DSM 22644 / CIP 104116 / JCM 14847 / LMG 12228 / 1C / PRS 101 / PAO1) protein is Type IV pilus assembly protein PilC (pilC).